A 62-amino-acid chain; its full sequence is MKIHKCSFCGADIPPGYGIMYVRSDGTVQRFCSRKCFVSAVKYGRNPRKLAWVRKKKAKTSK.

Zn(2+) contacts are provided by C6, C9, C32, and C36. The C4-type zinc-finger motif lies at 6 to 36 (CSFCGADIPPGYGIMYVRSDGTVQRFCSRKC).

It belongs to the eukaryotic ribosomal protein eL24 family. As to quaternary structure, part of the 50S ribosomal subunit. Forms a cluster with proteins L3 and L14. The cofactor is Zn(2+).

In terms of biological role, binds to the 23S rRNA. The chain is Large ribosomal subunit protein eL24 from Pyrobaculum calidifontis (strain DSM 21063 / JCM 11548 / VA1).